The sequence spans 607 residues: Elongation factor 4 (607 aa).

Residues Ser11–Thr193 form the tr-type G domain. GTP-binding positions include Asp23–Thr28 and Asn140–Asp143.

Belongs to the TRAFAC class translation factor GTPase superfamily. Classic translation factor GTPase family. LepA subfamily.

The protein localises to the cell membrane. The catalysed reaction is GTP + H2O = GDP + phosphate + H(+). Required for accurate and efficient protein synthesis under certain stress conditions. May act as a fidelity factor of the translation reaction, by catalyzing a one-codon backward translocation of tRNAs on improperly translocated ribosomes. Back-translocation proceeds from a post-translocation (POST) complex to a pre-translocation (PRE) complex, thus giving elongation factor G a second chance to translocate the tRNAs correctly. Binds to ribosomes in a GTP-dependent manner. The sequence is that of Elongation factor 4 from Bacillus mycoides (strain KBAB4) (Bacillus weihenstephanensis).